The sequence spans 302 residues: Nucleotide-binding protein Bcep1808_2900 (302 aa).

Residue 8–15 (GISGSGKS) coordinates ATP. GTP is bound at residue 57 to 60 (DARS).

The protein belongs to the RapZ-like family.

Its function is as follows. Displays ATPase and GTPase activities. In Burkholderia vietnamiensis (strain G4 / LMG 22486) (Burkholderia cepacia (strain R1808)), this protein is Nucleotide-binding protein Bcep1808_2900.